A 597-amino-acid chain; its full sequence is Sialic acid-binding Ig-like lectin 12 (597 aa).

The signal sequence occupies residues 1–20 (MLLLLLLLLLPPLLCGRVGA). Ig-like V-type domains follow at residues 21-144 (KEQK…VNVT) and 145-271 (ASQD…VHVT). Residues 21-483 (KEQKDYLLTM…RPISGVTLGA (463 aa)) lie on the Extracellular side of the membrane. A disulfide bridge connects residues Cys46 and Cys106. Asn142, Asn181, Asn232, and Asn292 each carry an N-linked (GlcNAc...) asparagine glycan. Cystine bridges form between Cys168/Cys301, Cys173/Cys233, and Cys295/Cys344. Positions 277–360 (PTFSIPGTLE…AGVTTTRAVR (84 aa)) constitute an Ig-like C2-type 1 domain. 3 N-linked (GlcNAc...) asparagine glycosylation sites follow: Asn362, Asn369, and Asn387. The Ig-like C2-type 2 domain occupies 367–464 (PQNLTMTVFQ…GSQHISLSLS (98 aa)). Cys403 and Cys448 are oxidised to a cystine. A helical membrane pass occupies residues 484–504 (VGGAGATALVFLSFCIIFVVV). Topologically, residues 505–597 (RSCRKKSARP…YEYSEINILK (93 aa)) are cytoplasmic. The interval 514–558 (PAVGVGDTGMEDTNAVRGSASQGPLIESPADDSPPHHAPPALATP) is disordered. The ITIM motif motif lies at 565–570 (IQYASL). Residues Tyr567 and Tyr590 each carry the phosphotyrosine modification. The short motif at 588 to 593 (YEYSEI) is the SLAM-like motif element.

It belongs to the immunoglobulin superfamily. SIGLEC (sialic acid binding Ig-like lectin) family.

The protein resides in the membrane. Functionally, putative adhesion molecule that mediates sialic-acid dependent binding to cells. The sialic acid recognition site may be masked by cis interactions with sialic acids on the same cell surface. In Pan troglodytes (Chimpanzee), this protein is Sialic acid-binding Ig-like lectin 12 (SIGLEC12).